The following is a 287-amino-acid chain: Pantothenate synthetase (287 aa).

30 to 37 lines the ATP pocket; that stretch reads MGALHSGH. H37 acts as the Proton donor in catalysis. Residue Q61 coordinates (R)-pantoate. A beta-alanine-binding site is contributed by Q61. 152-155 lines the ATP pocket; the sequence is GQKD. A (R)-pantoate-binding site is contributed by Q158. Residues I181 and 189–192 contribute to the ATP site; that span reads ESSR.

This sequence belongs to the pantothenate synthetase family. As to quaternary structure, homodimer.

It is found in the cytoplasm. It carries out the reaction (R)-pantoate + beta-alanine + ATP = (R)-pantothenate + AMP + diphosphate + H(+). The protein operates within cofactor biosynthesis; (R)-pantothenate biosynthesis; (R)-pantothenate from (R)-pantoate and beta-alanine: step 1/1. Catalyzes the condensation of pantoate with beta-alanine in an ATP-dependent reaction via a pantoyl-adenylate intermediate. The polypeptide is Pantothenate synthetase (Corynebacterium efficiens (strain DSM 44549 / YS-314 / AJ 12310 / JCM 11189 / NBRC 100395)).